The sequence spans 190 residues: Ribosome hibernation promotion factor (190 aa).

The tract at residues 101-190 (RDRGDQEVFV…KYGLIQTSEQ (90 aa)) is required for ribosome-binding.

It belongs to the HPF/YfiA ribosome-associated protein family. Long HPF subfamily. Interacts with 100S ribosomes during exponential growth, as 100S ribosomes decrease (after 28 hours) also found associated with 30s and 50S subunits.

The protein localises to the cytoplasm. In terms of biological role, required and sufficient for dimerization of active 70S ribosomes into 100S ribosomes. 110S ribosomes are probably translationally inactive and may serve as a reservoir of easily reactivated ribosomes when necessary in the cell. Also reduces the translation efficiency of a small number of genes. Unlike E.coli, 100S ribosomes are present during exponential growth and decrease during stationary phase. This strain produces 30% fewer 100S ribosomes than strain N315 and RN4200 under the same growth conditions. The sequence is that of Ribosome hibernation promotion factor from Staphylococcus aureus (strain USA300).